The primary structure comprises 182 residues: Small ribosomal subunit protein uS5 (182 aa).

The S5 DRBM domain occupies 16-79 (FVDRLVHINR…EAAKRGMIYV (64 aa)).

This sequence belongs to the universal ribosomal protein uS5 family. In terms of assembly, part of the 30S ribosomal subunit. Contacts proteins S4 and S8.

Functionally, with S4 and S12 plays an important role in translational accuracy. Its function is as follows. Located at the back of the 30S subunit body where it stabilizes the conformation of the head with respect to the body. The polypeptide is Small ribosomal subunit protein uS5 (Bartonella quintana (strain Toulouse) (Rochalimaea quintana)).